The following is a 334-amino-acid chain: Non-functional pseudokinase ZED1 (334 aa).

The Protein kinase domain maps to 49-334 (FSESRIISSW…KELKLIEKLS (286 aa)). ATP contacts are provided by residues 55–63 (ISSWGYFIW) and lysine 76. Residues threonine 125 and threonine 177 each carry the O-acetylthreonine modification.

It belongs to the protein kinase superfamily. Ser/Thr protein kinase family. ZRK subfamily. Interacts with RPP13L4/ZAR1. Component of an immune signaling complex made of, at least, SZE1, BKN2/SZE2, ZAR1 and ZED1. Binds directly to SZE1 at the plasma membrane. In terms of tissue distribution, expressed in seedlings, young leaves, floral organs, shoot apical meristems (SAM) and inflorescence stems.

It localises to the cytoplasm. The protein resides in the cytosol. It is found in the nucleus. The protein localises to the cell membrane. Its function is as follows. Together with RPP13L4/ZAR1, involved in the ambient temperature (above 22 degrees Celsius)-sensitive aerial organ development. Together with RPP13L4/ZAR1, involved in the regulation of the ambient temperature-sensitive intersection of growth and immune response in the absence of pathogens, by repressing the transcription of SNC1. Probable non-functional kinase required for recognition of the Pseudomonas syringae type III effector HopZ1a by RPP13L4/ZAR1 and, together with SZE1 and SZE2, to trigger subsequent defense responses. May function as a decoy to trap HopZ1a in the ZAR1 complex for recognition by the plant immune system. The protein is Non-functional pseudokinase ZED1 of Arabidopsis thaliana (Mouse-ear cress).